A 448-amino-acid chain; its full sequence is Methylenetetrahydrofolate--tRNA-(uracil-5-)-methyltransferase TrmFO (448 aa).

Gly-13 to Gly-18 contacts FAD.

The protein belongs to the MnmG family. TrmFO subfamily. It depends on FAD as a cofactor.

It localises to the cytoplasm. The enzyme catalyses uridine(54) in tRNA + (6R)-5,10-methylene-5,6,7,8-tetrahydrofolate + NADH + H(+) = 5-methyluridine(54) in tRNA + (6S)-5,6,7,8-tetrahydrofolate + NAD(+). It carries out the reaction uridine(54) in tRNA + (6R)-5,10-methylene-5,6,7,8-tetrahydrofolate + NADPH + H(+) = 5-methyluridine(54) in tRNA + (6S)-5,6,7,8-tetrahydrofolate + NADP(+). Functionally, catalyzes the folate-dependent formation of 5-methyl-uridine at position 54 (M-5-U54) in all tRNAs. The chain is Methylenetetrahydrofolate--tRNA-(uracil-5-)-methyltransferase TrmFO from Streptococcus pyogenes serotype M3 (strain ATCC BAA-595 / MGAS315).